The sequence spans 566 residues: Pyrophosphate--fructose 6-phosphate 1-phosphotransferase subunit beta 1 (566 aa).

Ser-16 is modified (phosphoserine). Position 105 (Gly-105) interacts with diphosphate. Asp-199 contributes to the Mg(2+) binding site. Substrate contacts are provided by residues 227–229 (TID), 266–267 (KY), 274–276 (MGR), Glu-335, and 440–443 (YEGR). Residue Asp-229 is the Proton acceptor of the active site.

Belongs to the phosphofructokinase type A (PFKA) family. PPi-dependent PFK group II subfamily. Clade 'Long' sub-subfamily. In terms of assembly, tetramer of two alpha (regulatory) and two beta (catalytic) chains. Mg(2+) is required as a cofactor.

It is found in the cytoplasm. The enzyme catalyses beta-D-fructose 6-phosphate + diphosphate = beta-D-fructose 1,6-bisphosphate + phosphate + H(+). Its pathway is carbohydrate degradation; glycolysis; D-glyceraldehyde 3-phosphate and glycerone phosphate from D-glucose: step 3/4. Allosterically activated by fructose 2,6-bisphosphate. Catalytic subunit of pyrophosphate--fructose 6-phosphate 1-phosphotransferase. Catalyzes the phosphorylation of D-fructose 6-phosphate, the first committing step of glycolysis. Uses inorganic phosphate (PPi) as phosphoryl donor instead of ATP like common ATP-dependent phosphofructokinases (ATP-PFKs), which renders the reaction reversible, and can thus function both in glycolysis and gluconeogenesis. This chain is Pyrophosphate--fructose 6-phosphate 1-phosphotransferase subunit beta 1, found in Arabidopsis thaliana (Mouse-ear cress).